Reading from the N-terminus, the 286-residue chain is NAD kinase (286 aa).

The Proton acceptor role is filled by Asp-74. Residues 74 to 75, 148 to 149, Asp-178, Ala-186, 189 to 194, and Gln-244 each bind NAD(+); these read DG, ND, and TAYNLS.

This sequence belongs to the NAD kinase family. A divalent metal cation serves as cofactor.

The protein resides in the cytoplasm. The enzyme catalyses NAD(+) + ATP = ADP + NADP(+) + H(+). Functionally, involved in the regulation of the intracellular balance of NAD and NADP, and is a key enzyme in the biosynthesis of NADP. Catalyzes specifically the phosphorylation on 2'-hydroxyl of the adenosine moiety of NAD to yield NADP. The polypeptide is NAD kinase (Campylobacter jejuni subsp. jejuni serotype O:6 (strain 81116 / NCTC 11828)).